The primary structure comprises 473 residues: MAVKTYQAGVTQYRQSYWQPDYVPLDTDILACFKITPQPGVDREEAAAAVAAESSCGTWTTVWTDLLTDLDYYKGRAYRLEDVPGDDTCYYAFIAYPIDLFEEGSVVNVFTSLVGNVFGFKAVRALRLEDLRFPIAYVKTCGGPPHGIQVERDRLNKYGRPMLGCTIKPKLGLSAKNYGRACYEALRGGLDFTKDDENINSQPFMRWRDRFDFVMEAVQKAEQETGERKGHYLNVTAPTPEEMYKRAEHAKEIGAPIIMHDYLAGGLCANAGLANWCRDNGILLHIHRAMHAVIDRNPHHGIHFRVLTKILRLSGGDHLHTGTVVGKLEGDRASTLGWIDLLRESFVPEDRSRGIFFDQDWGSMPGCFAVASGGIHVWHMPALVTIFGDDSVLQFGGGTLGHPWGNAAGAHANRVALEACVQARAEGRQLEKEGKDILTAAAAHSPELKIAMETWKEIKFEFEAVDQLAIANK.

Residues N116 and T166 each coordinate substrate. K168 acts as the Proton acceptor in catalysis. K170 is a binding site for substrate. The Mg(2+) site is built by K194, D196, and E197. N6-carboxylysine is present on K194. H287 (proton acceptor) is an active-site residue. Residues R288, H320, and S372 each contribute to the substrate site.

Belongs to the RuBisCO large chain family. Type I subfamily. Heterohexadecamer of 8 large chains and 8 small chains. Mg(2+) serves as cofactor.

The catalysed reaction is 2 (2R)-3-phosphoglycerate + 2 H(+) = D-ribulose 1,5-bisphosphate + CO2 + H2O. The enzyme catalyses D-ribulose 1,5-bisphosphate + O2 = 2-phosphoglycolate + (2R)-3-phosphoglycerate + 2 H(+). Its function is as follows. RuBisCO catalyzes two reactions: the carboxylation of D-ribulose 1,5-bisphosphate, the primary event in carbon dioxide fixation, as well as the oxidative fragmentation of the pentose substrate. Both reactions occur simultaneously and in competition at the same active site. This chain is Ribulose bisphosphate carboxylase large chain 3, found in Nitrobacter hamburgensis (strain DSM 10229 / NCIMB 13809 / X14).